The primary structure comprises 274 residues: Thiamine kinase (274 aa).

Belongs to the thiamine kinase family.

It catalyses the reaction thiamine + ATP = thiamine phosphate + ADP + H(+). It participates in cofactor biosynthesis; thiamine diphosphate biosynthesis; thiamine phosphate from thiamine: step 1/1. Functionally, catalyzes the ATP-dependent phosphorylation of thiamine to thiamine phosphate. Is involved in thiamine salvage. This chain is Thiamine kinase, found in Escherichia coli O45:K1 (strain S88 / ExPEC).